The sequence spans 360 residues: tRNA N6-adenosine threonylcarbamoyltransferase (360 aa).

Residues His-115 and His-119 each contribute to the Fe cation site. Substrate is bound by residues 137-141, Asp-170, Gly-183, and Asn-283; that span reads LVSGG. Residue Asp-311 participates in Fe cation binding.

Belongs to the KAE1 / TsaD family. Requires Fe(2+) as cofactor.

The protein localises to the cytoplasm. It carries out the reaction L-threonylcarbamoyladenylate + adenosine(37) in tRNA = N(6)-L-threonylcarbamoyladenosine(37) in tRNA + AMP + H(+). In terms of biological role, required for the formation of a threonylcarbamoyl group on adenosine at position 37 (t(6)A37) in tRNAs that read codons beginning with adenine. Is involved in the transfer of the threonylcarbamoyl moiety of threonylcarbamoyl-AMP (TC-AMP) to the N6 group of A37, together with TsaE and TsaB. TsaD likely plays a direct catalytic role in this reaction. In Rhizobium meliloti (strain 1021) (Ensifer meliloti), this protein is tRNA N6-adenosine threonylcarbamoyltransferase.